We begin with the raw amino-acid sequence, 212 residues long: ATP-dependent Clp protease proteolytic subunit (212 aa).

The Nucleophile role is filled by Ser-109. His-134 is a catalytic residue.

Belongs to the peptidase S14 family. In terms of assembly, fourteen ClpP subunits assemble into 2 heptameric rings which stack back to back to give a disk-like structure with a central cavity, resembling the structure of eukaryotic proteasomes.

Its subcellular location is the cytoplasm. It catalyses the reaction Hydrolysis of proteins to small peptides in the presence of ATP and magnesium. alpha-casein is the usual test substrate. In the absence of ATP, only oligopeptides shorter than five residues are hydrolyzed (such as succinyl-Leu-Tyr-|-NHMec, and Leu-Tyr-Leu-|-Tyr-Trp, in which cleavage of the -Tyr-|-Leu- and -Tyr-|-Trp bonds also occurs).. Cleaves peptides in various proteins in a process that requires ATP hydrolysis. Has a chymotrypsin-like activity. Plays a major role in the degradation of misfolded proteins. This Bdellovibrio bacteriovorus (strain ATCC 15356 / DSM 50701 / NCIMB 9529 / HD100) protein is ATP-dependent Clp protease proteolytic subunit.